The following is a 208-amino-acid chain: Outer-membrane lipoprotein carrier protein (208 aa).

The signal sequence occupies residues 1–23 (MKKTVKNLTALLTLALAAPWALA).

The protein belongs to the LolA family. As to quaternary structure, monomer.

It is found in the periplasm. Participates in the translocation of lipoproteins from the inner membrane to the outer membrane. Only forms a complex with a lipoprotein if the residue after the N-terminal Cys is not an aspartate (The Asp acts as a targeting signal to indicate that the lipoprotein should stay in the inner membrane). In Actinobacillus succinogenes (strain ATCC 55618 / DSM 22257 / CCUG 43843 / 130Z), this protein is Outer-membrane lipoprotein carrier protein.